We begin with the raw amino-acid sequence, 185 residues long: Ribosome-recycling factor (185 aa).

This sequence belongs to the RRF family.

Its subcellular location is the cytoplasm. In terms of biological role, responsible for the release of ribosomes from messenger RNA at the termination of protein biosynthesis. May increase the efficiency of translation by recycling ribosomes from one round of translation to another. The polypeptide is Ribosome-recycling factor (Alteromonas mediterranea (strain DSM 17117 / CIP 110805 / LMG 28347 / Deep ecotype)).